A 2073-amino-acid chain; its full sequence is Histone acetyltransferase KAT6B (2073 aa).

Residues 1-77 form the SAMD1-like winged helix (WH) domain; sequence MVKLANPLYT…LASYKDPDNP (77 aa). A disordered region spans residues 72–97; that stretch reads KDPDNPGRFSSVKPGTFPKSAKGSRG. Residues 103–176 enclose the H15 domain; that stretch reads RNVDWNKLLR…KDGPQYRVNY (74 aa). 2 PHD-type zinc fingers span residues 213-272 and 269-320; these read IPIC…CKTC and CKTC…CRPK. S355 bears the Phosphoserine mark. Disordered regions lie at residues 360-409, 442-531, 553-583, and 639-663; these read EGSM…RPGA, FTPS…VPSL, TQGQ…TAKS, and VTPQ…PDQD. Residues 361 to 717 form a negatively regulates HAT activity region; that stretch reads GSMNAFTGRG…ECESGVEDCG (357 aa). Residues 379–399 show a composition bias toward polar residues; the sequence is KVCTTPSSGHAASGKDSSSRL. Positions 447–460 are enriched in basic and acidic residues; it reads DGRRSRGEIIDFSK. Polar residues predominate over residues 470 to 485; the sequence is QKQSCTSHVLATGTTQ. The span at 488–499 shows a compositional bias: pro residues; that stretch reads KPPPSSLPPPTP. Residues 501–531 are compositionally biased toward low complexity; the sequence is SGQSPSSQKSSTATSSPSPQSSSSQCSVPSL. Phosphoserine is present on S647. K673 is covalently cross-linked (Glycyl lysine isopeptide (Lys-Gly) (interchain with G-Cter in SUMO2)). Residues 715–989 enclose the MYST-type HAT domain; sequence DCGRYPSVIE…LDPDSLRWTP (275 aa). Residues 718–1008 are catalytic; it reads RYPSVIEFGK…EEEREAEKEA (291 aa). A C2HC MYST-type zinc finger spans residues 748–773; that stretch reads LYLCEFCLKYMKSKNILLRHSKKCGW. The interaction with BRPF1 stretch occupies residues 752–1008; that stretch reads EFCLKYMKSK…EEEREAEKEA (257 aa). K815 is modified (N6-acetyllysine; by autocatalysis). Acetyl-CoA contacts are provided by residues 856 to 860 and 865 to 871; these read SCIMI and QRQGFGR. Residue E891 is the Proton donor/acceptor of the active site. S895 is a binding site for acetyl-CoA. Disordered regions lie at residues 1022–1452, 1484–1538, and 1580–1619; these read EQEI…FKEV, SCNS…MEID, and QSPQ…SPSV. The span at 1025 to 1043 shows a compositional bias: polar residues; sequence ILSTRANSRQSPAKVQSKN. K1038, K1042, and K1044 each carry N6-acetyllysine. S1048 carries the phosphoserine modification. Acidic residues predominate over residues 1069-1105; that stretch reads SEEEEEEEDEEEEEEEEEEEEDEEEEEEEEEEEEEEN. Residues 1106–1117 are compositionally biased toward polar residues; it reads IQSSPPRLTKPQ. Basic residues predominate over residues 1121-1140; the sequence is IKRKRPFVLKKKRGRKRRRI. Positions 1142-1155 are enriched in low complexity; it reads SSVTTETISETTEV. Over residues 1187–1200 the composition is skewed to basic residues; that stretch reads PVLRKAFQHQPGKK. Composition is skewed to basic and acidic residues over residues 1229-1243, 1306-1315, and 1341-1350; these read SNLK…EPLK, RIEEEVKETG, and EKPEDDLIKP. The span at 1351–1374 shows a compositional bias: acidic residues; it reads EEEEEEEEEEEEEEEEEEGEEEEG. Composition is skewed to basic and acidic residues over residues 1378 to 1390 and 1396 to 1407; these read VEKD…SQEK and STEKEDSARLDD. The segment covering 1408 to 1417 has biased composition (acidic residues); it reads HEEEEEEDEE. The span at 1433 to 1452 shows a compositional bias: basic and acidic residues; it reads HMESAEVEKEELPRESFKEV. Positions 1498–1507 are enriched in acidic residues; the sequence is AVPESDEEPP. Basic and acidic residues predominate over residues 1513 to 1529; it reads QKQDQKNSKEVDTEFKE. The segment at 1560-2073 is interaction with RUNX1 and RUNX2; sequence QDCAETQEAC…QSLNGSYMRR (514 aa). The span at 1580 to 1591 shows a compositional bias: polar residues; the sequence is QSPQIATTLDDC. Over residues 1594–1611 the composition is skewed to low complexity; sequence SDHSSPVSSVHSHPGQSV.

This sequence belongs to the MYST (SAS/MOZ) family. As to quaternary structure, component of the MOZ/MORF complex composed at least of ING5, KAT6A, KAT6B, MEAF6 and one of BRPF1, BRD1/BRPF2 and BRPF3. Interacts with RUNX1 and RUNX2. Post-translationally, autoacetylated. Autoacetylation at Lys-815 is required for proper function. In terms of tissue distribution, ubiquitously expressed, with high levels in heart, pancreas, testis and ovary.

Its subcellular location is the nucleus. It carries out the reaction L-lysyl-[protein] + acetyl-CoA = N(6)-acetyl-L-lysyl-[protein] + CoA + H(+). Functionally, histone acetyltransferase which may be involved in both positive and negative regulation of transcription. Required for RUNX2-dependent transcriptional activation. May be involved in cerebral cortex development. Component of the MOZ/MORF complex which has a histone H3 acetyltransferase activity. The polypeptide is Histone acetyltransferase KAT6B (KAT6B) (Homo sapiens (Human)).